Consider the following 458-residue polypeptide: tRNA modification GTPase MnmE (458 aa).

The (6S)-5-formyl-5,6,7,8-tetrahydrofolate site is built by Arg30, Glu90, and Lys129. Positions 225–379 (GLSICLIGCP…LHQTIDTIIW (155 aa)) constitute a TrmE-type G domain. A K(+)-binding site is contributed by Asn235. GTP-binding positions include 235–240 (NVGKSS), 254–260 (SPIPGTT), and 279–282 (DTAG). Position 239 (Ser239) interacts with Mg(2+). K(+) is bound by residues Ser254, Ile256, and Thr259. Thr260 lines the Mg(2+) pocket. Lys458 is a binding site for (6S)-5-formyl-5,6,7,8-tetrahydrofolate.

The protein belongs to the TRAFAC class TrmE-Era-EngA-EngB-Septin-like GTPase superfamily. TrmE GTPase family. In terms of assembly, homodimer. Heterotetramer of two MnmE and two MnmG subunits. K(+) serves as cofactor.

The protein resides in the cytoplasm. Its function is as follows. Exhibits a very high intrinsic GTPase hydrolysis rate. Involved in the addition of a carboxymethylaminomethyl (cmnm) group at the wobble position (U34) of certain tRNAs, forming tRNA-cmnm(5)s(2)U34. The sequence is that of tRNA modification GTPase MnmE from Protochlamydia amoebophila (strain UWE25).